Reading from the N-terminus, the 2789-residue chain is Multiple epidermal growth factor-like domains protein 8 (2789 aa).

Positions 1–27 (MALGGALALALALALAVLGPLSLRVLA) are cleaved as a signal peptide. The Extracellular segment spans residues 28-2591 (GDCKGQRQVL…FFRQDQAHID (2564 aa)). Intrachain disulfides connect cysteine 30–cysteine 57, cysteine 142–cysteine 152, cysteine 146–cysteine 158, cysteine 174–cysteine 184, cysteine 178–cysteine 191, and cysteine 193–cysteine 202. Residues 30–140 (CKGQRQVLRE…LGFNASFRFS (111 aa)) enclose the CUB 1 domain. A glycan (N-linked (GlcNAc...) asparagine) is linked at asparagine 50. EGF-like domains follow at residues 138 to 168 (RFSL…GGPD) and 170 to 203 (GLQE…RACD). Kelch repeat units lie at residues 241–287 (LLAV…AVAW), 290–338 (LLVL…AGHA), 346–399 (WLYV…FHAP), 402–453 (TLLV…FHTA), 459–511 (YMVV…APPS), and 525–575 (VLLV…SRDP). PSI domains are found at residues 561-613 (YCSM…SDCQ), 847-899 (ACTS…ALCP), and 900-947 (LCEE…EECP). Asparagine 1048 carries an N-linked (GlcNAc...) asparagine glycan. In terms of domain architecture, EGF-like 3; calcium-binding spans 1074-1115 (DVDECRLGLARCHPRATCLNTPLSYECHCQRGYQGDGITHCN). Intrachain disulfides connect cysteine 1078-cysteine 1091, cysteine 1085-cysteine 1100, cysteine 1102-cysteine 1114, cysteine 1163-cysteine 1171, cysteine 1165-cysteine 1179, cysteine 1182-cysteine 1191, cysteine 1194-cysteine 1208, cysteine 1211-cysteine 1224, cysteine 1213-cysteine 1231, cysteine 1233-cysteine 1242, cysteine 1245-cysteine 1259, cysteine 1263-cysteine 1302, cysteine 1336-cysteine 1367, cysteine 1407-cysteine 1421, cysteine 1415-cysteine 1433, and cysteine 1435-cysteine 1444. Laminin EGF-like domains lie at 1163-1210 (CGCS…GCRP) and 1211-1261 (CQCN…SCFR). An N-linked (GlcNAc...) asparagine glycan is attached at asparagine 1226. Residues 1263–1405 (CGGRALLTNV…WGFNASVGSA (143 aa)) enclose the CUB 2 domain. An N-linked (GlcNAc...) asparagine glycan is attached at asparagine 1271. The residue at position 1353 (threonine 1353) is a Phosphothreonine. Residues 1403 to 1445 (GSARCGSGGPGSCPVPQECVPQDGAAGAGLCRCPQGWAGPHCR) enclose the EGF-like 4 domain. Kelch repeat units follow at residues 1522–1570 (TLWM…SFHA), 1580–1629 (AMYL…TARR), 1632–1679 (SLLL…SAVY), 1685–1735 (SLYV…HASA), 1740–1787 (TMVV…ESVA), and 1796–1841 (RLYI…WCHG). 4 consecutive PSI domains span residues 1820–1860 (PCRL…PPCS), 1868–1923 (ECRR…NDCR), 2004–2062 (PCHL…ESCS), and 2064–2121 (GCAQ…LSCP). Asparagine 2010 is a glycosylation site (N-linked (GlcNAc...) asparagine). The EGF-like 5 domain occupies 2122–2160 (PEDECANGHHDCNETQNCHDQPHGYECSCKTGYTMDNVT). 2 disulfides stabilise this stretch: cysteine 2126–cysteine 2139 and cysteine 2133–cysteine 2148. 2 N-linked (GlcNAc...) asparagine glycosylation sites follow: asparagine 2158 and asparagine 2173. 8 disulfide bridges follow: cysteine 2197–cysteine 2205, cysteine 2199–cysteine 2214, cysteine 2217–cysteine 2226, cysteine 2229–cysteine 2243, cysteine 2324–cysteine 2333, cysteine 2326–cysteine 2341, cysteine 2343–cysteine 2368, and cysteine 2371–cysteine 2385. Laminin EGF-like domains follow at residues 2197-2245 (CRCN…TCRP) and 2324-2387 (CQCN…QCYR). The segment at 2468–2508 (VHIQPPPPPPPPPPPADGVPRVAADLGGLGTGSGSGSPVEP) is disordered. The span at 2471–2484 (QPPPPPPPPPPPAD) shows a compositional bias: pro residues. Residues 2592 to 2612 (LFVFFSVFFSCFFLFLSLCVL) traverse the membrane as a helical segment. Residues 2613–2789 (LWKAKQALDQ…SQDNLTSMSL (177 aa)) are Cytoplasmic-facing. Gly residues predominate over residues 2762–2776 (GGAGGSGHGGGGGRK). The tract at residues 2762-2789 (GGAGGSGHGGGGGRKGLLSQDNLTSMSL) is disordered. Over residues 2780–2789 (SQDNLTSMSL) the composition is skewed to polar residues.

In terms of tissue distribution, highest expression in brain, testis and kidney.

It is found in the membrane. Functionally, acts as a negative regulator of hedgehog signaling. The protein is Multiple epidermal growth factor-like domains protein 8 (Megf8) of Mus musculus (Mouse).